Here is a 328-residue protein sequence, read N- to C-terminus: Arylacetonitrilase (328 aa).

In terms of domain architecture, CN hydrolase spans 5 to 278 (VRVAVTQAEP…EGIIYADLDL (274 aa)). The active-site Proton acceptor is Glu-45. Residue Lys-125 is part of the active site. Cys-160 acts as the Nucleophile in catalysis.

It belongs to the carbon-nitrogen hydrolase superfamily. Nitrilase family.

It carries out the reaction a nitrile + 2 H2O = a carboxylate + NH4(+). It catalyses the reaction 4-chlorophenylacetonitrile + 2 H2O = 4-chlorophenylacetate + NH4(+). Nitrilase that hydrolyzes preferentially phenylacetonitrile and (R,S)-mandelonitrile. Also acts on dinitriles like phenylenediacetonitriles (PDAs) 1,2-PDA, 1,3-PDA, and 1,4-PDA, and cyanophenyl acetonitriles (CPAs) 2-CPA and 4-CPA. The polypeptide is Arylacetonitrilase (nit2) (Aspergillus kawachii (strain NBRC 4308) (White koji mold)).